The chain runs to 190 residues: Elongation factor P (190 aa).

It belongs to the elongation factor P family.

The protein resides in the cytoplasm. Its pathway is protein biosynthesis; polypeptide chain elongation. Its function is as follows. Involved in peptide bond synthesis. Stimulates efficient translation and peptide-bond synthesis on native or reconstituted 70S ribosomes in vitro. Probably functions indirectly by altering the affinity of the ribosome for aminoacyl-tRNA, thus increasing their reactivity as acceptors for peptidyl transferase. This is Elongation factor P (efp) from Mycoplasma pneumoniae (strain ATCC 29342 / M129 / Subtype 1) (Mycoplasmoides pneumoniae).